The chain runs to 587 residues: Methylcrotonoyl-CoA carboxylase beta chain, mitochondrial (587 aa).

The transit peptide at 1 to 26 (MLRILGRRVVSASKELTSIQQWRIRP) directs the protein to the mitochondrion. The region spanning 68–324 (MEGILSELRS…AAKQGMEGTF (257 aa)) is the CoA carboxyltransferase N-terminal domain. Residues 68–579 (MEGILSELRS…SAALNRPLED (512 aa)) are carboxyltransferase. Positions 333 to 579 (EPLYDINELR…SAALNRPLED (247 aa)) constitute a CoA carboxyltransferase C-terminal domain. The segment at 367 to 396 (EFDEFKKQYGTTLVTGFARIYGQTVGIIGN) is acyl-CoA binding.

Belongs to the AccD/PCCB family. As to quaternary structure, probably a heterodimer composed of biotin-containing alpha subunits and beta subunits. In roots, cotyledons, leaves, flowers, ovaries, siliques and embryos.

The protein resides in the mitochondrion matrix. The catalysed reaction is 3-methylbut-2-enoyl-CoA + hydrogencarbonate + ATP = 3-methyl-(2E)-glutaconyl-CoA + ADP + phosphate + H(+). The protein operates within amino-acid degradation; L-leucine degradation; (S)-3-hydroxy-3-methylglutaryl-CoA from 3-isovaleryl-CoA: step 2/3. Functionally, carboxyltransferase subunit of the 3-methylcrotonyl-CoA carboxylase, an enzyme that catalyzes the conversion of 3-methylcrotonyl-CoA to 3-methylglutaconyl-CoA, a critical step for leucine and isovaleric acid catabolism. This is Methylcrotonoyl-CoA carboxylase beta chain, mitochondrial (MCCB) from Arabidopsis thaliana (Mouse-ear cress).